Reading from the N-terminus, the 1036-residue chain is Phospholipase D1 (1036 aa).

The PX domain occupies 81 to 212; that stretch reads IKAQVLEVER…TEFLDVSQLS (132 aa). The PH domain occupies 219-328; sequence PKGLEGMIMK…WGGAIEEFIQ (110 aa). Residues Cys-240 and Cys-241 are each lipidated (S-palmitoyl cysteine). The 28-residue stretch at 459-486 folds into the PLD phosphodiesterase 1 domain; it reads YLWAHHEKLVIIDQSVAFVGGIDLAYGR. Positions 463-890 are catalytic; the sequence is HHEKLVIIDQ…MLGKRDSEMA (428 aa). Ser-499, Ser-561, and Ser-591 each carry phosphoserine. Positions 853 to 880 constitute a PLD phosphodiesterase 2 domain; the sequence is ELIYVHSKLLIADDNTVIIGSANINDRS.

Belongs to the phospholipase D family. Interacts with PIP5K1B.

Its subcellular location is the cytoplasm. It localises to the perinuclear region. The protein resides in the endoplasmic reticulum membrane. The protein localises to the golgi apparatus membrane. It is found in the late endosome membrane. It carries out the reaction a 1,2-diacyl-sn-glycero-3-phosphocholine + H2O = a 1,2-diacyl-sn-glycero-3-phosphate + choline + H(+). Stimulated by phosphatidylinositol 4,5-bisphosphate and phosphatidylinositol 3,4,5-trisphosphate, activated by the phosphokinase C-alpha, by the ADP-ribosylation factor-1 (ARF-1), and to a lesser extent by GTP-binding proteins: RHO A, RAC-1 and CDC42. In terms of biological role, implicated as a critical step in numerous cellular pathways, including signal transduction, membrane trafficking, and the regulation of mitosis. May be involved in the regulation of perinuclear intravesicular membrane traffic. This Cricetulus griseus (Chinese hamster) protein is Phospholipase D1 (PLD1).